The sequence spans 336 residues: Phenylalanine--tRNA ligase alpha subunit (336 aa).

E263 contacts Mg(2+).

The protein belongs to the class-II aminoacyl-tRNA synthetase family. Phe-tRNA synthetase alpha subunit type 1 subfamily. As to quaternary structure, tetramer of two alpha and two beta subunits. Mg(2+) serves as cofactor.

The protein resides in the cytoplasm. The enzyme catalyses tRNA(Phe) + L-phenylalanine + ATP = L-phenylalanyl-tRNA(Phe) + AMP + diphosphate + H(+). The polypeptide is Phenylalanine--tRNA ligase alpha subunit (Thermosynechococcus vestitus (strain NIES-2133 / IAM M-273 / BP-1)).